Here is a 357-residue protein sequence, read N- to C-terminus: Peptide chain release factor 1 (357 aa).

Gln-235 carries the N5-methylglutamine modification.

It belongs to the prokaryotic/mitochondrial release factor family. In terms of processing, methylated by PrmC. Methylation increases the termination efficiency of RF1.

Its subcellular location is the cytoplasm. Functionally, peptide chain release factor 1 directs the termination of translation in response to the peptide chain termination codons UAG and UAA. This Alkaliphilus metalliredigens (strain QYMF) protein is Peptide chain release factor 1.